A 336-amino-acid chain; its full sequence is tRNA (guanine(37)-N(1))-methyltransferase Trm5b (336 aa).

Residues Arg186, 223 to 224, 251 to 252, and Asn265 contribute to the S-adenosyl-L-methionine site; these read DI and DV.

The protein belongs to the class I-like SAM-binding methyltransferase superfamily. TRM5/TYW2 family. In terms of assembly, monomer.

Its subcellular location is the cytoplasm. It catalyses the reaction guanosine(37) in tRNA + S-adenosyl-L-methionine = N(1)-methylguanosine(37) in tRNA + S-adenosyl-L-homocysteine + H(+). Functionally, specifically methylates the N1 position of guanosine-37 in various tRNAs. In Methanocaldococcus jannaschii (strain ATCC 43067 / DSM 2661 / JAL-1 / JCM 10045 / NBRC 100440) (Methanococcus jannaschii), this protein is tRNA (guanine(37)-N(1))-methyltransferase Trm5b (trm5b).